A 710-amino-acid chain; its full sequence is Iron-sulfur clusters transporter ATM1, mitochondrial (710 aa).

A mitochondrion-targeting transit peptide spans 1-38 (MWLSLPRSGYGSVATLTSKRVLACLTPLRQFSTSPAVS). Residues 35-52 (PAVSNANHKNVDNINKSP) are compositionally biased toward polar residues. The interval 35–83 (PAVSNANHKNVDNINKSPANDAANNAVEKGDKPTTSPEKLATKAEKSSA) is disordered. Residues 39 to 129 (NANHKNVDNI…PKGKTSVKFR (91 aa)) are Mitochondrial matrix-facing. The helical transmembrane segment at 130 to 151 (VLVAVALLVGAKLLNVQVPFFF) threads the bilayer. The ABC transmembrane type-1 domain maps to 130-419 (VLVAVALLVG…LGSVYRDLRQ (290 aa)). The Mitochondrial intermembrane portion of the chain corresponds to 152–173 (KEIIDDMNIEWNSATALGVGIT). Residues 174–197 (ALIFSYGAARFGAVLFGELRNAIF) traverse the membrane as a helical segment. Residues 198–246 (ASVAQKAIKEVATNVFRHLLKLDMAFHLSRQTGGITRAIDRGTKGISFV) are Mitochondrial matrix-facing. The helical transmembrane segment at 247–270 (LSSMVFHIIPIALEISLVCGILSY) threads the bilayer. A topological domain (mitochondrial intermembrane) is located at residue asparagine 271. The helical transmembrane segment at 272–292 (FGWKYALVTGATMVSYAIFTI) threads the bilayer. The Mitochondrial matrix portion of the chain corresponds to 293–358 (TTTSWRTKFR…ASIKIATSLA (66 aa)). Glutathione contacts are provided by residues 298-302 (RTKFR) and 361-364 (NSGQ). A helical membrane pass occupies residues 359–377 (FLNSGQNLIFSSALTAMMY). Topologically, residues 378–392 (MTCCGVADGSLTVGD) are mitochondrial intermembrane. A helical transmembrane segment spans residues 393 to 414 (LVLVNQLVFQLSVPLNFLGSVY). Glycine 411 contacts glutathione. Residues 415–710 (RDLRQSLLDM…AEEKAAKKDV (296 aa)) are Mitochondrial matrix-facing. The ABC transporter domain maps to 453 to 687 (IRFENVTYGY…DGLYKSMWDA (235 aa)). Residues tyrosine 462 and 486–497 (GPSGSGKSTILK) each bind ATP.

Belongs to the ABC transporter superfamily. ABCB family. Heavy Metal importer (TC 3.A.1.210) subfamily. In terms of assembly, homodimer.

The protein localises to the mitochondrion inner membrane. Performs an essential function in the generation of cytoplasmic iron-sulfur proteins by mediating the ATP-dependent export of Fe/S cluster precursors synthesized by NFS1 and other mitochondrial proteins. Hydrolyzes ATP. Binds glutathione and may function by transporting a glutathione-conjugated iron-sulfur compound. The polypeptide is Iron-sulfur clusters transporter ATM1, mitochondrial (Yarrowia lipolytica (strain CLIB 122 / E 150) (Yeast)).